Consider the following 453-residue polypeptide: Trigger factor (453 aa).

The 86-residue stretch at Gly171–Leu256 folds into the PPIase FKBP-type domain.

Belongs to the FKBP-type PPIase family. Tig subfamily.

The protein resides in the cytoplasm. It catalyses the reaction [protein]-peptidylproline (omega=180) = [protein]-peptidylproline (omega=0). Involved in protein export. Acts as a chaperone by maintaining the newly synthesized protein in an open conformation. Functions as a peptidyl-prolyl cis-trans isomerase. This chain is Trigger factor, found in Nitrobacter winogradskyi (strain ATCC 25391 / DSM 10237 / CIP 104748 / NCIMB 11846 / Nb-255).